Here is a 187-residue protein sequence, read N- to C-terminus: UPF0340 protein str1894 (187 aa).

It belongs to the UPF0340 family.

This chain is UPF0340 protein str1894, found in Streptococcus thermophilus (strain CNRZ 1066).